The sequence spans 245 residues: NAD(P)H-hydrate epimerase (245 aa).

A YjeF N-terminal domain is found at 21 to 221 (MREIDRLAVQ…DLGIPPAVYT (201 aa)). 72–76 (GNGGG) provides a ligand contact to (6S)-NADPHX. K(+)-binding residues include N73 and D135. (6S)-NADPHX contacts are provided by residues 139 to 145 (GYSLLGA) and D168. S171 is a K(+) binding site.

Belongs to the NnrE/AIBP family. K(+) is required as a cofactor.

The enzyme catalyses (6R)-NADHX = (6S)-NADHX. It carries out the reaction (6R)-NADPHX = (6S)-NADPHX. Its function is as follows. Catalyzes the epimerization of the S- and R-forms of NAD(P)HX, a damaged form of NAD(P)H that is a result of enzymatic or heat-dependent hydration. This is a prerequisite for the S-specific NAD(P)H-hydrate dehydratase to allow the repair of both epimers of NAD(P)HX. In Dehalogenimonas lykanthroporepellens (strain ATCC BAA-1523 / JCM 15061 / BL-DC-9), this protein is NAD(P)H-hydrate epimerase.